Reading from the N-terminus, the 77-residue chain is Large ribosomal subunit protein uL24 (77 aa).

The disordered stretch occupies residues 42–61 (KKHQKPSQTNANGGVVESEG).

It belongs to the universal ribosomal protein uL24 family. As to quaternary structure, part of the 50S ribosomal subunit.

Functionally, one of two assembly initiator proteins, it binds directly to the 5'-end of the 23S rRNA, where it nucleates assembly of the 50S subunit. In terms of biological role, one of the proteins that surrounds the polypeptide exit tunnel on the outside of the subunit. The sequence is that of Large ribosomal subunit protein uL24 from Lactobacillus acidophilus (strain ATCC 700396 / NCK56 / N2 / NCFM).